The chain runs to 156 residues: Endoribonuclease YbeY (156 aa).

Positions 117, 121, and 127 each coordinate Zn(2+).

This sequence belongs to the endoribonuclease YbeY family. The cofactor is Zn(2+).

It is found in the cytoplasm. Single strand-specific metallo-endoribonuclease involved in late-stage 70S ribosome quality control and in maturation of the 3' terminus of the 16S rRNA. This is Endoribonuclease YbeY from Shewanella piezotolerans (strain WP3 / JCM 13877).